Consider the following 91-residue polypeptide: Acylphosphatase (91 aa).

The 89-residue stretch at 3–91 folds into the Acylphosphatase-like domain; that stretch reads KLRMNVQGRV…EETEQFKVIQ (89 aa). Active-site residues include arginine 18 and asparagine 36.

The protein belongs to the acylphosphatase family.

It carries out the reaction an acyl phosphate + H2O = a carboxylate + phosphate + H(+). The chain is Acylphosphatase (acyP) from Enterococcus faecalis (strain ATCC 700802 / V583).